Reading from the N-terminus, the 188-residue chain is Proline-rich protein 3 (188 aa).

The tract at residues 1–157 is disordered; the sequence is MPKRKKQNQH…DPQVMEDKSD (157 aa). 2 stretches are compositionally biased toward pro residues: residues 35-46 and 69-82; these read IGPPSLLGPPPM and LIPP…PPWG. Residues 83-96 show a composition bias toward low complexity; the sequence is RGPIRRGLGPRSSP. A compositionally biased stretch (basic and acidic residues) spans 145–157; sequence PKDDPQVMEDKSD. The C3H1-type zinc-finger motif lies at 155 to 183; that stretch reads KSDRPVCRHFAKKGHCRYEDLCAFYHPGV.

The polypeptide is Proline-rich protein 3 (PRR3) (Pan troglodytes (Chimpanzee)).